Reading from the N-terminus, the 680-residue chain is WD repeat-containing protein 48 homolog (680 aa).

WD repeat units lie at residues 26–65 (QHRN…SEKY), 71–110 (HHND…CMST), 113–152 (THRD…ALTA), 164–203 (GSKD…RSMK), 206–245 (GHTE…CVQT), 248–287 (VHKE…NKTL), 290–329 (EEQA…RCTM), and 350–389 (KGGA…KKEQ). The interval 592–616 (ETTPSGGNANNSLQNSQSDANSEGS) is disordered.

The protein belongs to the WD repeat WDR48 family. As to quaternary structure, catalytic component of the Usp12-46 deubiquitylase complex consisting of Usp12-46, Wdr20 and Uaf1; regulatory subunit that, together wtih Wdr20, stabilizes Usp12-46. The Usp12-46 deubiquitylase complex associates with arr/arrow; the interaction leads to deubiquitination and stabilization of arr/arrow.

Its function is as follows. Regulatory component of the Usp12-46 deubiquitylase complex. activates deubiquitination by increasing the catalytic turnover without increasing the affinity of deubiquitinating enzymes for the substrate. The complex deubiquitylates the wg/wingless-signaling receptor arr/arrow, which stabilizes the receptor and increases its concentration at the cell surface; this enhances the sensitivity of cells to wg/wingless-signal stimulation. This increases the amplitude and spatial range of the signaling response to the wg/wingless morphogen gradient, facilitating the precise concentration-dependent regulation of its target genes. Together with Wdr20 and Usp12-46 required for wg/wingless-mediated signaling in the wing imaginal disc and for wg/wingless-dependent regulation of intestinal stem cell proliferation. The protein is WD repeat-containing protein 48 homolog of Drosophila yakuba (Fruit fly).